An 852-amino-acid chain; its full sequence is Ubiquitin carboxyl-terminal hydrolase 4 (852 aa).

The region spanning 172–296 (ASGTVLLVDV…WSNAHPDFCV (125 aa)) is the Rhodanese domain. The segment at 369–393 (RSSSSSSNINERPGSVPPQLSNGST) is disordered. A USP domain is found at 488-849 (VGLVNCGNSC…NAYVLFYHRI (362 aa)). C497 acts as the Nucleophile in catalysis. The active-site Proton acceptor is the H806.

Belongs to the peptidase C19 family.

The protein resides in the cytoplasm. It is found in the late endosome membrane. It catalyses the reaction Thiol-dependent hydrolysis of ester, thioester, amide, peptide and isopeptide bonds formed by the C-terminal Gly of ubiquitin (a 76-residue protein attached to proteins as an intracellular targeting signal).. With respect to regulation, RFU1 is an inhibitor of deubiquitination activity. In terms of biological role, ubiquitin thioesterase that acts at the late endosome/prevacuolar compartment to recover ubiquitin from ubiquitinated membrane proteins en route to the vacuole. Also removes ubiquitin from soluble proteins targeted to proteasomes. Is essential to maintain a normal level of free ubiquitin. Required for promoting coordination of DNA replication and avoids DNA overreplication. The polypeptide is Ubiquitin carboxyl-terminal hydrolase 4 (DOA4) (Eremothecium gossypii (strain ATCC 10895 / CBS 109.51 / FGSC 9923 / NRRL Y-1056) (Yeast)).